The sequence spans 539 residues: MPTALPAWQSLTQHAESIRATHMRDWFAAPDAEERVRAFTLEAAGLTVDYSKNRITPDTLSQLLQLAEEAGVLTLRDAMLRGERINNTEHRAVLHVALRGRAEHDYRADGEPVMPEVLRVRAQMRDFANRVHSGAWTGHSGRRITDVVNIGIGGSDLGPRMVCRALDHLAVPQVRVHFVSNVDGTDLAETLDHLNPDTTLAIVCSKTFTTLETMANAHSMRRWFVDHGVAESQLKHHFVAVSTNREAVVQFGIDPDNMFTFWDWVGGRFSLWSAVGLSIVLAIGPQQFEAMLDGARAMDRHFATAAPRENLPLILGMLSVWYRGFFDAASACTVPYCAPLELLTDFMQQLEMESNGKSVQRNGAAIDTDTGPIVWGTAGTNGQHAYFQLIHQGSQIVPVDFITTLEPVRNLPGHHAKLLANCFAQGEALLLGRTAEEVRAGGVTDEALVPHMVFEGNRPSTTILMERLDAASLGALIACAEHRTFVQGAVWNINSFDQWGVELGKKLAKPIQAELEGAPASVAHDASTVALIRRAKAAL.

Glutamate 353 acts as the Proton donor in catalysis. Active-site residues include histidine 384 and lysine 505.

Belongs to the GPI family.

It is found in the cytoplasm. It catalyses the reaction alpha-D-glucose 6-phosphate = beta-D-fructose 6-phosphate. The protein operates within carbohydrate biosynthesis; gluconeogenesis. It participates in carbohydrate degradation; glycolysis; D-glyceraldehyde 3-phosphate and glycerone phosphate from D-glucose: step 2/4. Its function is as follows. Catalyzes the reversible isomerization of glucose-6-phosphate to fructose-6-phosphate. The chain is Glucose-6-phosphate isomerase from Ralstonia pickettii (strain 12J).